The chain runs to 603 residues: Rab proteins geranylgeranyltransferase component A (603 aa).

The residue at position 470 (Ser470) is a Phosphoserine.

Belongs to the Rab GDI family.

Its function is as follows. Substrate-binding subunit (component A) of the Rab geranylgeranyltransferase (GGTase) complex. Binds unprenylated Rab proteins and presents the substrate peptide to the catalytic component B. The component A is thought to be regenerated by transferring its prenylated Rab back to the donor membrane. The sequence is that of Rab proteins geranylgeranyltransferase component A (MRS6) from Saccharomyces cerevisiae (strain ATCC 204508 / S288c) (Baker's yeast).